We begin with the raw amino-acid sequence, 877 residues long: Leucine--tRNA ligase (877 aa).

A 'HIGH' region motif is present at residues 43–53 (PYPSGRIHMGH). The 'KMSKS' region signature appears at 628-632 (KMSKS). Lysine 631 is an ATP binding site.

The protein belongs to the class-I aminoacyl-tRNA synthetase family.

The protein localises to the cytoplasm. The catalysed reaction is tRNA(Leu) + L-leucine + ATP = L-leucyl-tRNA(Leu) + AMP + diphosphate. In Brucella melitensis biotype 2 (strain ATCC 23457), this protein is Leucine--tRNA ligase.